Consider the following 987-residue polypeptide: Mitotic checkpoint serine/threonine-protein kinase bub-1 (987 aa).

Disordered regions lie at residues 278–385 (RRRH…TSKS) and 574–599 (LAANQAVQPSVTESSKPERSDPKDSS). A compositionally biased stretch (basic and acidic residues) spans 350-364 (ERLKIMTAGRKDGNP). The segment covering 368-380 (STSISSNYSTASA) has biased composition (low complexity). Residues 575 to 587 (AANQAVQPSVTES) are compositionally biased toward polar residues. Over residues 588-599 (SKPERSDPKDSS) the composition is skewed to basic and acidic residues. In terms of domain architecture, Protein kinase spans 690–987 (LHIQTLIGQG…EACDLAANQK (298 aa)). ATP contacts are provided by residues 696-704 (IGQGGYAKV) and lysine 718. The Proton acceptor role is filled by aspartate 814.

It belongs to the protein kinase superfamily. Ser/Thr protein kinase family. BUB1 subfamily. As to quaternary structure, interacts (via kinase domain) with mdf-1 (via coiled coil domain); the interaction recruits mdf-1 to unattached kinetochores during mitosis and between homologous chromosomes in early anaphase of meiosis I. May interact with bub-3; for localization at the kinetochore and the onset of anaphase.

Its subcellular location is the cytoplasm. It is found in the cell cortex. It localises to the nucleus. The protein localises to the chromosome. The protein resides in the centromere. Its subcellular location is the kinetochore. The enzyme catalyses L-seryl-[protein] + ATP = O-phospho-L-seryl-[protein] + ADP + H(+). It catalyses the reaction L-threonyl-[protein] + ATP = O-phospho-L-threonyl-[protein] + ADP + H(+). In terms of biological role, serine/threonine-protein kinase essential for spindle-assembly checkpoint signaling. Plays a key role in the recruitment of the checkpoint proteins bub-3, mdf-1 and mdf-2 to unattached kinetochores. mdf-1 recruitment is independent of bub-1 kinase activity. Has a role in the correct kinetochore localization of the spindly-like protein spdl-1. In addition, during meiotic anaphase I, controls the recruitment of hcp-1/2 and klp-19 to the ring-shaped domain formed between chromosomes. Involved in chromosome alignment, chromosome homolog segregation and spindle assembly. In association with bub-3 at the kinetochore region of chromosomes, promotes the onset on anaphase independently from spindle checkpoint signaling and promotes the formation of stable end-on bipolar attachments of chromosomes. Plays a role in nuclear envelope breakdown. Required maternally during embryogenesis and in the zygote for the postembryonic development of several tissues including ventral cord neurons, gonad, intestine and seam cells. This Caenorhabditis elegans protein is Mitotic checkpoint serine/threonine-protein kinase bub-1.